The sequence spans 488 residues: Phenylalanine--tRNA ligase alpha subunit (488 aa).

Residues threonine 315, 354–356 (QLD), phenylalanine 394, and phenylalanine 419 contribute to the L-phenylalanine site.

It belongs to the class-II aminoacyl-tRNA synthetase family. Phe-tRNA synthetase alpha subunit type 2 subfamily. Tetramer of two alpha and two beta subunits. Mg(2+) serves as cofactor.

The protein resides in the cytoplasm. It carries out the reaction tRNA(Phe) + L-phenylalanine + ATP = L-phenylalanyl-tRNA(Phe) + AMP + diphosphate + H(+). In Pyrobaculum arsenaticum (strain DSM 13514 / JCM 11321 / PZ6), this protein is Phenylalanine--tRNA ligase alpha subunit.